The chain runs to 279 residues: Apolipoprotein L domain-containing protein 1 (279 aa).

3 helical membrane passes run 83–105 (SLVA…IVGL), 122–142 (GLGV…SLIF), and 192–212 (IALY…FLIP). Residues 226-253 (LKAKIQKLAESLESCTGALDELSEQLES) are a coiled coil.

This sequence belongs to the apolipoprotein L family. Expressed in neonatal dermal microvascular endothelial cells.

The protein resides in the cell membrane. Its subcellular location is the cell junction. It is found in the cytoplasmic vesicle. The protein localises to the secretory vesicle. Is a modulator of endothelial barrier permeability, required for proper organization of endothelial cell-cell junctions and cytoskeleton. It also plays a role in the modulation of secretory autophagy. May affect blood-brain barrier permeability. In Homo sapiens (Human), this protein is Apolipoprotein L domain-containing protein 1 (APOLD1).